The sequence spans 352 residues: D-alanine--D-alanine ligase (352 aa).

The ATP-grasp domain occupies 133 to 342; the sequence is KTVFAAAGLP…FPKLVDRLIQ (210 aa). ATP is bound at residue 169 to 224; the sequence is DETIGYPNFVKPANLGSSVGISKVRSRLELEAALDSAASFDRRIVVEAGVVAREVE. Mg(2+) is bound by residues Asp-295, Glu-309, and Asn-311.

This sequence belongs to the D-alanine--D-alanine ligase family. It depends on Mg(2+) as a cofactor. Mn(2+) serves as cofactor.

Its subcellular location is the cytoplasm. The catalysed reaction is 2 D-alanine + ATP = D-alanyl-D-alanine + ADP + phosphate + H(+). It functions in the pathway cell wall biogenesis; peptidoglycan biosynthesis. Cell wall formation. This Acaryochloris marina (strain MBIC 11017) protein is D-alanine--D-alanine ligase.